The primary structure comprises 276 residues: Octopine-binding periplasmic protein (276 aa).

Residues 1–20 (MKLKTILCAALLLVAGQAAA) form the signal peptide. The cysteines at positions 57 and 64 are disulfide-linked.

The protein belongs to the bacterial solute-binding protein 3 family.

The protein localises to the periplasm. Functionally, component of the octopine active transport system probably consisting of four subunits: Q, M, P and T. The polypeptide is Octopine-binding periplasmic protein (occT) (Agrobacterium tumefaciens (strain Ach5)).